We begin with the raw amino-acid sequence, 177 residues long: Bifunctional protein PyrR (177 aa).

Positions 97 to 109 match the PRPP-binding motif; sequence IILVDDVLYTGRT.

It belongs to the purine/pyrimidine phosphoribosyltransferase family. PyrR subfamily.

It carries out the reaction UMP + diphosphate = 5-phospho-alpha-D-ribose 1-diphosphate + uracil. Functionally, regulates the transcription of the pyrimidine nucleotide (pyr) operon in response to exogenous pyrimidines. Its function is as follows. Also displays a weak uracil phosphoribosyltransferase activity which is not physiologically significant. This Nitrosococcus oceani (strain ATCC 19707 / BCRC 17464 / JCM 30415 / NCIMB 11848 / C-107) protein is Bifunctional protein PyrR.